A 278-amino-acid chain; its full sequence is Dermonecrotic toxin LhSicTox-alphaIV1iii (278 aa).

H5 is an active-site residue. Positions 25 and 27 each coordinate Mg(2+). H41 functions as the Nucleophile in the catalytic mechanism. 2 disulfide bridges follow: C45/C51 and C47/C192. A Mg(2+)-binding site is contributed by D85.

This sequence belongs to the arthropod phospholipase D family. Class II subfamily. Mg(2+) is required as a cofactor. Expressed by the venom gland.

Its subcellular location is the secreted. It catalyses the reaction an N-(acyl)-sphingosylphosphocholine = an N-(acyl)-sphingosyl-1,3-cyclic phosphate + choline. The catalysed reaction is an N-(acyl)-sphingosylphosphoethanolamine = an N-(acyl)-sphingosyl-1,3-cyclic phosphate + ethanolamine. It carries out the reaction a 1-acyl-sn-glycero-3-phosphocholine = a 1-acyl-sn-glycero-2,3-cyclic phosphate + choline. The enzyme catalyses a 1-acyl-sn-glycero-3-phosphoethanolamine = a 1-acyl-sn-glycero-2,3-cyclic phosphate + ethanolamine. Functionally, dermonecrotic toxins cleave the phosphodiester linkage between the phosphate and headgroup of certain phospholipids (sphingolipid and lysolipid substrates), forming an alcohol (often choline) and a cyclic phosphate. This toxin acts on sphingomyelin (SM). It may also act on ceramide phosphoethanolamine (CPE), lysophosphatidylcholine (LPC) and lysophosphatidylethanolamine (LPE), but not on lysophosphatidylserine (LPS), and lysophosphatidylglycerol (LPG). It acts by transphosphatidylation, releasing exclusively cyclic phosphate products as second products. Induces dermonecrosis, hemolysis, increased vascular permeability, edema, inflammatory response, and platelet aggregation. The polypeptide is Dermonecrotic toxin LhSicTox-alphaIV1iii (Loxosceles hirsuta (Recluse spider)).